We begin with the raw amino-acid sequence, 327 residues long: Probable cell division protein WhiA (327 aa).

The H-T-H motif DNA-binding region spans 275 to 308; sequence SLEELGRLADPVMTKDAVAGRIRRLLSMADRKAK. The disordered stretch occupies residues 307–327; sequence AKTEGIPDTESAVTPELLEEA.

This sequence belongs to the WhiA family.

Involved in cell division and chromosome segregation. The sequence is that of Probable cell division protein WhiA from Mycobacteroides abscessus (strain ATCC 19977 / DSM 44196 / CCUG 20993 / CIP 104536 / JCM 13569 / NCTC 13031 / TMC 1543 / L948) (Mycobacterium abscessus).